Consider the following 326-residue polypeptide: MSKSNQKIASIEQLSNNEGIISALAFDQRGALKRMMAKHQTEEPTVAQIEQLKVLVAEELTQYASSILLDPEYGLPASDARNKDCGLLLAYEKTGYDVNAKGRLPDCLVEWSAKRLKEQGANAVKFLLYYDVDDAEEINIQKKAYIERIGSECVAEDIPFFLEVLTYDDNIPDNGSVEFAKVKPRKVNEAMKLFSEPRFNVDVLKVEVPVNMKYVEGFAEGEVVYTKEEAAQHFKNQDAATHLPYIYLSAGVSAELFQETLKFAHEAGAKFNGVLCGRATWSGAVQVYIEQGEDAAREWLRTTGFKNIDDLNKVLKDTATSWKQRK.

This sequence belongs to the aldolase LacD family.

It carries out the reaction D-tagatofuranose 1,6-bisphosphate = D-glyceraldehyde 3-phosphate + dihydroxyacetone phosphate. It participates in carbohydrate metabolism; D-tagatose 6-phosphate degradation; D-glyceraldehyde 3-phosphate and glycerone phosphate from D-tagatose 6-phosphate: step 2/2. The chain is Tagatose 1,6-diphosphate aldolase from Staphylococcus aureus (strain MSSA476).